The chain runs to 504 residues: Probable chlorophyll(ide) b reductase NYC1, chloroplastic (504 aa).

The N-terminal 33 residues, 1-33 (MAAAAVVHLSVHGRLRRSPELHARPYHRPSLLR), are a transit peptide targeting the chloroplast. The segment at 41-63 (ADNGGEEASSSPPPPTTAEARRR) is disordered. Transmembrane regions (helical) follow at residues 114 to 134 (YVIT…LSGG) and 141 to 161 (LIWY…ANSV). 175–199 (ITGSTRGLGKALAREFLLSGDRVVI) serves as a coordination point for NAD(+). Tyrosine 339 functions as the Proton acceptor in the catalytic mechanism. The helical transmembrane segment at 479-499 (WVSVFSLSVVCAFIILSSSGG) threads the bilayer.

It belongs to the short-chain dehydrogenases/reductases (SDR) family. As to quaternary structure, interacts with NOL to form a complex that acts as a chlorophyll b reductase. Expressed in leaves and stems. Also detected in non-photosynthetic tissues such as roots.

Its subcellular location is the plastid. The protein localises to the chloroplast thylakoid membrane. It carries out the reaction 7(1)-hydroxychlorophyllide a + NAD(+) = chlorophyllide b + NADH + H(+). It catalyses the reaction 7(1)-hydroxychlorophyllide a + NADP(+) = chlorophyllide b + NADPH + H(+). Its function is as follows. Required for proper chloroplast degradation. Involved in chlorophyll b degradation. The chain is Probable chlorophyll(ide) b reductase NYC1, chloroplastic (NYC1) from Oryza sativa subsp. japonica (Rice).